A 274-amino-acid polypeptide reads, in one-letter code: Large ribosomal subunit protein uL2cz/uL2cy (274 aa).

2 disordered regions span residues 1-21 (MAIH…VDSQ) and 225-274 (PVDH…RRSK).

This sequence belongs to the universal ribosomal protein uL2 family. As to quaternary structure, part of the 50S ribosomal subunit.

The protein resides in the plastid. It is found in the chloroplast. This is Large ribosomal subunit protein uL2cz/uL2cy (rpl2-A) from Gossypium barbadense (Sea Island cotton).